The following is a 450-amino-acid chain: Glucose-6-phosphate isomerase (450 aa).

Catalysis depends on E291, which acts as the Proton donor. Active-site residues include H312 and K426.

Belongs to the GPI family.

Its subcellular location is the cytoplasm. It carries out the reaction alpha-D-glucose 6-phosphate = beta-D-fructose 6-phosphate. Its pathway is carbohydrate biosynthesis; gluconeogenesis. It participates in carbohydrate degradation; glycolysis; D-glyceraldehyde 3-phosphate and glycerone phosphate from D-glucose: step 2/4. In terms of biological role, catalyzes the reversible isomerization of glucose-6-phosphate to fructose-6-phosphate. This Clostridium perfringens (strain ATCC 13124 / DSM 756 / JCM 1290 / NCIMB 6125 / NCTC 8237 / Type A) protein is Glucose-6-phosphate isomerase.